Here is a 258-residue protein sequence, read N- to C-terminus: Thiamine thiazole synthase (258 aa).

NAD(+) is bound by residues S36, 55–56 (ER), G63, I127, and 153–155 (HVD). D155 and H170 together coordinate Fe cation. Position 224 (M224) interacts with NAD(+). R234 provides a ligand contact to glycine.

Belongs to the THI4 family. In terms of assembly, homooctamer; tetramer of dimers. It depends on Fe(2+) as a cofactor.

The catalysed reaction is hydrogen sulfide + glycine + NAD(+) = ADP-5-ethyl-4-methylthiazole-2-carboxylate + nicotinamide + 3 H2O + H(+). It participates in cofactor biosynthesis; thiamine diphosphate biosynthesis. Involved in the biosynthesis of the thiazole moiety of thiamine. Catalyzes the conversion of NAD and glycine to adenosine diphosphate 5-(2-hydroxyethyl)-4-methylthiazole-2-carboxylate (ADT), an adenylated thiazole intermediate, using free sulfide as a source of sulfur. This Methanothermobacter thermautotrophicus (strain ATCC 29096 / DSM 1053 / JCM 10044 / NBRC 100330 / Delta H) (Methanobacterium thermoautotrophicum) protein is Thiamine thiazole synthase.